The chain runs to 443 residues: Protein AknT (443 aa).

The protein belongs to the cytochrome P450 family.

Involved in the biosynthesis of the anthracycline antitumor agent aclacinomycin A. AknT is required for the glycosylation of aklavinone aglycone by AknS to yield aclacinomycin T (rhodosaminyl-aklavinone). In Streptomyces galilaeus, this protein is Protein AknT.